Reading from the N-terminus, the 131-residue chain is Small ribosomal subunit protein uS11 (131 aa).

It belongs to the universal ribosomal protein uS11 family. In terms of assembly, part of the 30S ribosomal subunit. Interacts with proteins S7 and S18. Binds to IF-3.

Functionally, located on the platform of the 30S subunit, it bridges several disparate RNA helices of the 16S rRNA. Forms part of the Shine-Dalgarno cleft in the 70S ribosome. The polypeptide is Small ribosomal subunit protein uS11 (Helicobacter acinonychis (strain Sheeba)).